Consider the following 137-residue polypeptide: Basic phospholipase A2 beta-bungarotoxin A5 chain (137 aa).

Residues 1–9 (AVCVSLLGA) form the signal peptide. Residues 10-17 (ANIPPQHL) constitute a propeptide that is removed on maturation. Cystine bridges form between Cys-44–Cys-136, Cys-46–Cys-62, Cys-61–Cys-117, Cys-68–Cys-110, Cys-78–Cys-103, and Cys-96–Cys-108. Residues Tyr-45, Gly-47, and Gly-49 each contribute to the Ca(2+) site. His-65 is an active-site residue. Residue Asp-66 participates in Ca(2+) binding. The active site involves Asp-111.

Belongs to the phospholipase A2 family. Group I subfamily. D49 sub-subfamily. In terms of assembly, heterodimer; disulfide-linked. The A chains have phospholipase A2 activity and the B chains show homology with the basic protease inhibitors. Ca(2+) is required as a cofactor. In terms of tissue distribution, expressed by the venom gland.

The protein resides in the secreted. The catalysed reaction is a 1,2-diacyl-sn-glycero-3-phosphocholine + H2O = a 1-acyl-sn-glycero-3-phosphocholine + a fatty acid + H(+). In terms of biological role, snake venom phospholipase A2 (PLA2) that inhibits neuromuscular transmission by blocking acetylcholine release from the nerve termini. PLA2 catalyzes the calcium-dependent hydrolysis of the 2-acyl groups in 3-sn-phosphoglycerides. The chain is Basic phospholipase A2 beta-bungarotoxin A5 chain from Bungarus multicinctus (Many-banded krait).